The chain runs to 388 residues: Transcription factor SOX-7 (388 aa).

Disordered regions lie at residues 20–46 and 140–197; these read DAEL…SRIR and RDQN…VDTY. Basic and acidic residues-rich tracts occupy residues 36 to 45 and 146 to 164; these read PGDKGSESRI and PEKR…DRGE. Positions 45–113 form a DNA-binding region, HMG box; that stretch reads IRRPMNAFMV…QHMQDYPNYK (69 aa). One can recognise a Sox C-terminal domain in the interval 268–388; sequence VSMMSPVPGC…ATYYNSYSVS (121 aa).

In terms of assembly, interacts with CTNNB1/beta-catenin; this interaction may lead to the proteasomal degradation of active CTNNB1 and thus inhibition of Wnt/beta-catenin-stimulated transcription. Widely expressed in adult and fetal tissues. Present both in mesenchymal and epithelial cells in some adult tissues, including colon. Tends to be down-regulated in prostate adenocarcinomas and colorectal tumors due to promoter hypermethylation.

The protein localises to the nucleus. The protein resides in the cytoplasm. Binds to and activates the CDH5 promoter, hence plays a role in the transcriptional regulation of genes expressed in the hemogenic endothelium and blocks further differentiation into blood precursors. May be required for the survival of both hematopoietic and endothelial precursors during specification. Competes with GATA4 for binding and activation of the FGF3 promoter. Represses Wnt/beta-catenin-stimulated transcription, probably by targeting CTNNB1 to proteasomal degradation. Binds the DNA sequence 5'-AACAAT-3'. This Homo sapiens (Human) protein is Transcription factor SOX-7 (SOX7).